Reading from the N-terminus, the 317-residue chain is Apolipoprotein E (317 aa).

The signal sequence occupies residues 1–18 (MKVLWAALLVTFLAGCQA). Residues Thr26 and Thr36 are each glycosylated (O-linked (GalNAc...) threonine). Tandem repeats lie at residues 80 to 101 (ALMD…EQLT), 102 to 123 (PVAE…ARLG), 124 to 145 (ADME…AMLG), 146 to 167 (QSTE…KRLL), 168 to 189 (RDAD…EGAE), 190 to 211 (RGLS…VRAA), 212 to 233 (TVGS…ERLR), and 234 to 255 (ARME…EQVA). Residues 80-255 (ALMDETMKEL…RLDEVKEQVA (176 aa)) form an 8 X 22 AA approximate tandem repeats region. An N-linked (Glc) (glycation) lysine glycan is attached at Lys93. The residue at position 143 (Met143) is a Methionine sulfoxide. Ser147 carries the phosphoserine; by FAM20C modification. The segment at 158–168 (HLRKLRKRLLR) is LDL and other lipoprotein receptors binding. 162-165 (LRKR) lines the heparin pocket. Residues 210 to 290 (AATVGSLAGQ…SWFEPLVEDM (81 aa)) are lipid-binding and lipoprotein association. Residue Thr212 is glycosylated (O-linked (GalNAc...) threonine). 229 to 236 (GERLRARM) provides a ligand contact to heparin. A homooligomerization region spans residues 266-317 (QQIRLQAEAFQARLKSWFEPLVEDMQRQWAGLVEKVQAAVGTSAAPVPSDNH). A specificity for association with VLDL region spans residues 278-290 (RLKSWFEPLVEDM). Residue Thr307 is glycosylated (O-linked (GalNAc...) threonine). Residues Ser308 and Ser314 are each glycosylated (O-linked (GalNAc...) serine).

Belongs to the apolipoprotein A1/A4/E family. As to quaternary structure, homotetramer. May interact with ABCA1; functionally associated with ABCA1 in the biogenesis of HDLs. May interact with APP/A4 amyloid-beta peptide; the interaction is extremely stable in vitro but its physiological significance is unclear. May interact with MAPT. May interact with MAP2. In the cerebrospinal fluid, interacts with secreted SORL1. Interacts with PMEL; this allows the loading of PMEL luminal fragment on ILVs to induce fibril nucleation. (Microbial infection) Interacts with hepatitis C virus (HCV) envelope glycoprotein E2; this interaction is required for HCV infectivity and production. APOE exists as multiple glycosylated and sialylated glycoforms within cells and in plasma. The extent of glycosylation and sialylation are tissue and context specific. Plasma APOE undergoes desialylation and is less glycosylated and sialylated than the cellular form. Glycosylation is not required for proper expression and secretion. O-glycosylated with core 1 or possibly core 8 glycans. Thr-307 and Ser-314 are minor glycosylation sites compared to Ser-308. In terms of processing, glycated in plasma VLDL of normal subjects, and of hyperglycemic diabetic patients at a higher level (2-3 fold). Post-translationally, phosphorylated by FAM20C in the extracellular medium. Undergoes C-terminal proteolytic processing in neurons. C-terminally truncated APOE has a tendency to form neurotoxic intracellular neurofibrillary tangle-like inclusions in neurons. Produced by several tissues and cell types and mainly found associated with lipid particles in the plasma, the interstitial fluid and lymph. Mainly synthesized by liver hepatocytes. Significant quantities are also produced in brain, mainly by astrocytes and glial cells in the cerebral cortex, but also by neurons in frontal cortex and hippocampus. It is also expressed by cells of the peripheral nervous system. Also expressed by adrenal gland, testis, ovary, skin, kidney, spleen and adipose tissue and macrophages in various tissues.

Its subcellular location is the secreted. It localises to the extracellular space. It is found in the extracellular matrix. The protein localises to the extracellular vesicle. The protein resides in the endosome. Its subcellular location is the multivesicular body. Its function is as follows. APOE is an apolipoprotein, a protein associating with lipid particles, that mainly functions in lipoprotein-mediated lipid transport between organs via the plasma and interstitial fluids. APOE is a core component of plasma lipoproteins and is involved in their production, conversion and clearance. Apolipoproteins are amphipathic molecules that interact both with lipids of the lipoprotein particle core and the aqueous environment of the plasma. As such, APOE associates with chylomicrons, chylomicron remnants, very low density lipoproteins (VLDL) and intermediate density lipoproteins (IDL) but shows a preferential binding to high-density lipoproteins (HDL). It also binds a wide range of cellular receptors including the LDL receptor/LDLR, the LDL receptor-related proteins LRP1, LRP2 and LRP8 and the very low-density lipoprotein receptor/VLDLR that mediate the cellular uptake of the APOE-containing lipoprotein particles. Finally, APOE also has a heparin-binding activity and binds heparan-sulfate proteoglycans on the surface of cells, a property that supports the capture and the receptor-mediated uptake of APOE-containing lipoproteins by cells. A main function of APOE is to mediate lipoprotein clearance through the uptake of chylomicrons, VLDLs, and HDLs by hepatocytes. APOE is also involved in the biosynthesis by the liver of VLDLs as well as their uptake by peripheral tissues ensuring the delivery of triglycerides and energy storage in muscle, heart and adipose tissues. By participating in the lipoprotein-mediated distribution of lipids among tissues, APOE plays a critical role in plasma and tissues lipid homeostasis. APOE is also involved in two steps of reverse cholesterol transport, the HDLs-mediated transport of cholesterol from peripheral tissues to the liver, and thereby plays an important role in cholesterol homeostasis. First, it is functionally associated with ABCA1 in the biogenesis of HDLs in tissues. Second, it is enriched in circulating HDLs and mediates their uptake by hepatocytes. APOE also plays an important role in lipid transport in the central nervous system, regulating neuron survival and sprouting. APOE is also involved in innate and adaptive immune responses, controlling for instance the survival of myeloid-derived suppressor cells. Binds to the immune cell receptor LILRB4. APOE may also play a role in transcription regulation through a receptor-dependent and cholesterol-independent mechanism, that activates MAP3K12 and a non-canonical MAPK signal transduction pathway that results in enhanced AP-1-mediated transcription of APP. In terms of biological role, (Microbial infection) Through its interaction with HCV envelope glycoprotein E2, participates in the attachment of HCV to HSPGs and other receptors (LDLr, VLDLr, and SR-B1) on the cell surface and to the assembly, maturation and infectivity of HCV viral particles. This interaction is probably promoted via the up-regulation of cellular autophagy by the virus. This is Apolipoprotein E from Homo sapiens (Human).